The chain runs to 448 residues: MDLRPELPTASSASQVHPGAAAAAAAASIPVSMAGNLLRGPPLLLRAADKYPRTPKCARCRNHGVVSALKGHKRYCRWKDCMCAKCTLIAERQRVMAAQVALRRQQAQEENEARELQLLYGTAEGLALAAANGIIPPRPNYEVFGSVNNETNSDSSIPKYELFSKSQLSGSATPQQSVGKPASTESDSAPGISSPEGRHGGSGSENGDSESFISSPVSKPIKDGEETPGSVSSLGSDSGSETDKDDQEPSPSSAASRHMNAIDILTRVFPSHKRSVQELVLQGCGKDVVRAIEQILNNSGAQGPNKTGPEETWTAERMLQNAQQLPQSSASTTTPTRPMLPGAMTLSNRSAFSPLQPNAPHFGADPSTYPLGTPLGLNPLRLAYSAHSRGLAFMTPYSTTGLMPTLGFRPPMDYAFSDLIRDRTMLHKEQGYASGLYGPLVNNTPDKQ.

The DM DNA-binding region spans 57-104 (CARCRNHGVVSALKGHKRYCRWKDCMCAKCTLIAERQRVMAAQVALRR). A compositionally biased stretch (polar residues) spans 166 to 187 (SQLSGSATPQQSVGKPASTESD). Positions 166–259 (SQLSGSATPQ…SPSSAASRHM (94 aa)) are disordered. The span at 229–239 (GSVSSLGSDSG) shows a compositional bias: low complexity. One can recognise a DMA domain in the interval 259–294 (MNAIDILTRVFPSHKRSVQELVLQGCGKDVVRAIEQ).

This sequence belongs to the DMRT family.

The protein resides in the nucleus. Its function is as follows. May be involved in sexual development. This is Doublesex- and mab-3-related transcription factor A2 (dmrta2) from Monopterus albus (Swamp eel).